Consider the following 478-residue polypeptide: DNA-directed RNA polymerase II subunit RPB1 (478 aa).

Residues cysteine 68, cysteine 71, cysteine 78, histidine 81, cysteine 108, cysteine 111, and cysteine 149 each coordinate Zn(2+). Residues aspartate 474 and aspartate 476 each coordinate Mg(2+).

This sequence belongs to the RNA polymerase beta' chain family. Component of the RNA polymerase II (Pol II) complex consisting of 12 subunits. Phosphorylation activates POL II.

It localises to the nucleus. It carries out the reaction RNA(n) + a ribonucleoside 5'-triphosphate = RNA(n+1) + diphosphate. Functionally, DNA-dependent RNA polymerase catalyzes the transcription of DNA into RNA using the four ribonucleoside triphosphates as substrates. Largest and catalytic component of RNA polymerase II which synthesizes mRNA precursors and many functional non-coding RNAs. Forms the polymerase active center together with the second largest subunit. Pol II is the central component of the basal RNA polymerase II transcription machinery. It is composed of mobile elements that move relative to each other. RPB1 is part of the core element with the central large cleft, the clamp element that moves to open and close the cleft and the jaws that are thought to grab the incoming DNA template. At the start of transcription, a single-stranded DNA template strand of the promoter is positioned within the central active site cleft of Pol II. A bridging helix emanates from RPB1 and crosses the cleft near the catalytic site and is thought to promote translocation of Pol II by acting as a ratchet that moves the RNA-DNA hybrid through the active site by switching from straight to bent conformations at each step of nucleotide addition. During transcription elongation, Pol II moves on the template as the transcript elongates. Elongation is influenced by the phosphorylation status of the C-terminal domain (CTD) of Pol II largest subunit (RPB1), which serves as a platform for assembly of factors that regulate transcription initiation, elongation, termination and mRNA processing. The polypeptide is DNA-directed RNA polymerase II subunit RPB1 (RPB1) (Euplotoides octocarinatus (Freshwater ciliate)).